Consider the following 458-residue polypeptide: Ig mu chain C region secreted form (458 aa).

Positions 1–106 are CH1; it reads VSLSSPTLYP…SNRDLRVSFP (106 aa). Cysteines 28 and 90 form a disulfide. N-linked (GlcNAc...) asparagine glycans are attached at residues asparagine 46 and asparagine 114. The interval 107–222 is CH2; that stretch reads VDSELPPNVS…VSMSSECSTT (116 aa). Residues cysteine 137 and cysteine 200 are joined by a disulfide bond. N-linked (GlcNAc...) asparagine glycosylation is found at asparagine 212, asparagine 261, asparagine 277, and asparagine 284. Positions 223 to 327 are CH3; sequence PSPGIQVFPI…PLKHTISKSR (105 aa). 2 disulfides stabilise this stretch: cysteine 249–cysteine 308 and cysteine 356–cysteine 418. The segment at 328–458 is CH4; the sequence is EVAKHPPAVY…IMSDTASTCY (131 aa). An N-linked (GlcNAc...) asparagine glycan is attached at asparagine 445.

The protein resides in the secreted. The chain is Ig mu chain C region secreted form from Oryctolagus cuniculus (Rabbit).